Here is a 346-residue protein sequence, read N- to C-terminus: UDP-3-O-acylglucosamine N-acyltransferase (346 aa).

The Proton acceptor role is filled by H240.

Belongs to the transferase hexapeptide repeat family. LpxD subfamily. In terms of assembly, homotrimer.

It catalyses the reaction a UDP-3-O-[(3R)-3-hydroxyacyl]-alpha-D-glucosamine + a (3R)-hydroxyacyl-[ACP] = a UDP-2-N,3-O-bis[(3R)-3-hydroxyacyl]-alpha-D-glucosamine + holo-[ACP] + H(+). The protein operates within bacterial outer membrane biogenesis; LPS lipid A biosynthesis. Its function is as follows. Catalyzes the N-acylation of UDP-3-O-acylglucosamine using 3-hydroxyacyl-ACP as the acyl donor. Is involved in the biosynthesis of lipid A, a phosphorylated glycolipid that anchors the lipopolysaccharide to the outer membrane of the cell. This Phocaeicola vulgatus (strain ATCC 8482 / DSM 1447 / JCM 5826 / CCUG 4940 / NBRC 14291 / NCTC 11154) (Bacteroides vulgatus) protein is UDP-3-O-acylglucosamine N-acyltransferase.